Reading from the N-terminus, the 112-residue chain is Probable small nuclear ribonucleoprotein Sm D2 (112 aa).

Over residues 1–15 (MSRMNDETMEDKPDD) the composition is skewed to basic and acidic residues. Residues 1–23 (MSRMNDETMEDKPDDSNGPLSIL) form a disordered region. Positions 20–106 (LSILMDSVNN…VILVLKNPLG (87 aa)) constitute a Sm domain.

Belongs to the snRNP core protein family.

It is found in the nucleus. Its subcellular location is the cytoplasm. The protein resides in the cytosol. Its function is as follows. Plays a role in pre-mRNA splicing as a core component of the spliceosomal U1, U2, U4 and U5 small nuclear ribonucleoproteins (snRNPs), the building blocks of the spliceosome. This is Probable small nuclear ribonucleoprotein Sm D2 (snrpd2) from Dictyostelium discoideum (Social amoeba).